Here is a 746-residue protein sequence, read N- to C-terminus: Exocyst complex component 3-like protein (746 aa).

Residues Met-1–Glu-23 are disordered. The mediates interaction with EXOC2, EXOC4 and EXOC5 stretch occupies residues Met-1 to Thr-370.

This sequence belongs to the SEC6 family. In terms of assembly, interacts with EXOC2, EXOC4 and EXOC5; may be part of the exocyst.

It localises to the cytoplasmic vesicle. The protein localises to the secretory vesicle. In terms of biological role, as part of the exocyst, may play a role in regulated exocytosis of insulin granules. The chain is Exocyst complex component 3-like protein (EXOC3L1) from Homo sapiens (Human).